The sequence spans 142 residues: Midkine-A (142 aa).

A signal peptide spans 1–20 (MELRAFCVILLITVLAVSSQ). 5 cysteine pairs are disulfide-bonded: C36–C60, C44–C69, C51–C73, C83–C115, and C93–C125.

This sequence belongs to the pleiotrophin family. Expression at the mid-gastrula stage begins in the neural anlage, and becomes increasingly prominent in the central nervous system and head mesenchyme during neurula stages. Although the mRNA is localized to the developing central nervous system (CNS), the protein is deposited at the neuromuscular junction (NMJ). In the tailbud stage embryo, expressed in the head and tail regions as well as in the CNS. In adults, expression is highest in the brain, eye and bone, with lower expression in the heart and lung. Not expressed in the ovary.

The protein localises to the secreted. Secreted protein that functions as a cytokine and growth factor and mediates its signal through cell-surface proteoglycan and non-proteoglycan receptors. Binds cell-surface proteoglycan receptors via their chondroitin sulfate (CS) groups. Thereby regulates many processes like inflammatory response, cell proliferation, cell adhesion, cell growth, cell survival, tissue regeneration, cell differentiation and cell migration. Inhibits mesoderm formation and promotes neural formation during development. Plays a role in development of the neuromuscular junction (NMJ). Has antibacterial activity against both Gram-positive and Gram-negative bacteria. The protein is Midkine-A (mdk-a) of Xenopus laevis (African clawed frog).